A 119-amino-acid chain; its full sequence is Holo-[acyl-carrier-protein] synthase (119 aa).

Mg(2+)-binding residues include aspartate 8 and glutamate 59.

The protein belongs to the P-Pant transferase superfamily. AcpS family. Mg(2+) is required as a cofactor.

The protein localises to the cytoplasm. The catalysed reaction is apo-[ACP] + CoA = holo-[ACP] + adenosine 3',5'-bisphosphate + H(+). Transfers the 4'-phosphopantetheine moiety from coenzyme A to a Ser of acyl-carrier-protein. The sequence is that of Holo-[acyl-carrier-protein] synthase from Staphylococcus aureus (strain JH1).